The primary structure comprises 220 residues: Translation initiation factor 6 (220 aa).

This sequence belongs to the eIF-6 family.

In terms of biological role, binds to the 50S ribosomal subunit and prevents its association with the 30S ribosomal subunit to form the 70S initiation complex. The chain is Translation initiation factor 6 from Pyrobaculum aerophilum (strain ATCC 51768 / DSM 7523 / JCM 9630 / CIP 104966 / NBRC 100827 / IM2).